A 65-amino-acid polypeptide reads, in one-letter code: Toxin CsEM1 (65 aa).

In terms of domain architecture, LCN-type CS-alpha/beta spans 1 to 65 (KEGYLVNSYT…VWPLPNKTCN (65 aa)). Cystine bridges form between Cys12–Cys64, Cys16–Cys40, Cys25–Cys45, and Cys29–Cys47.

Belongs to the long (4 C-C) scorpion toxin superfamily. Sodium channel inhibitor family. Beta subfamily. In terms of tissue distribution, expressed by the venom gland.

The protein localises to the secreted. Functionally, beta toxins bind voltage-independently at site-4 of sodium channels (Nav) and shift the voltage of activation toward more negative potentials thereby affecting sodium channel activation and promoting spontaneous and repetitive firing. Highly potent. In Centruroides sculpturatus (Arizona bark scorpion), this protein is Toxin CsEM1.